Reading from the N-terminus, the 196-residue chain is ATP-dependent Clp protease proteolytic subunit (196 aa).

The Nucleophile role is filled by S96. H121 is a catalytic residue.

The protein belongs to the peptidase S14 family. As to quaternary structure, fourteen ClpP subunits assemble into 2 heptameric rings which stack back to back to give a disk-like structure with a central cavity, resembling the structure of eukaryotic proteasomes.

It localises to the cytoplasm. It carries out the reaction Hydrolysis of proteins to small peptides in the presence of ATP and magnesium. alpha-casein is the usual test substrate. In the absence of ATP, only oligopeptides shorter than five residues are hydrolyzed (such as succinyl-Leu-Tyr-|-NHMec, and Leu-Tyr-Leu-|-Tyr-Trp, in which cleavage of the -Tyr-|-Leu- and -Tyr-|-Trp bonds also occurs).. Its function is as follows. Cleaves peptides in various proteins in a process that requires ATP hydrolysis. Has a chymotrypsin-like activity. Plays a major role in the degradation of misfolded proteins. This chain is ATP-dependent Clp protease proteolytic subunit, found in Streptococcus pyogenes serotype M3 (strain SSI-1).